We begin with the raw amino-acid sequence, 627 residues long: 1-deoxy-D-xylulose-5-phosphate synthase (627 aa).

Residues H87 and 128–130 (GHS) contribute to the thiamine diphosphate site. A Mg(2+)-binding site is contributed by D159. Thiamine diphosphate contacts are provided by residues 160–161 (GA), N188, F295, and E375. N188 contacts Mg(2+).

Belongs to the transketolase family. DXPS subfamily. Homodimer. The cofactor is Mg(2+). Requires thiamine diphosphate as cofactor.

The catalysed reaction is D-glyceraldehyde 3-phosphate + pyruvate + H(+) = 1-deoxy-D-xylulose 5-phosphate + CO2. Its pathway is metabolic intermediate biosynthesis; 1-deoxy-D-xylulose 5-phosphate biosynthesis; 1-deoxy-D-xylulose 5-phosphate from D-glyceraldehyde 3-phosphate and pyruvate: step 1/1. Its function is as follows. Catalyzes the acyloin condensation reaction between C atoms 2 and 3 of pyruvate and glyceraldehyde 3-phosphate to yield 1-deoxy-D-xylulose-5-phosphate (DXP). The sequence is that of 1-deoxy-D-xylulose-5-phosphate synthase from Pseudomonas paraeruginosa (strain DSM 24068 / PA7) (Pseudomonas aeruginosa (strain PA7)).